The chain runs to 421 residues: MTESVLDYMSRLGRDARAASRLLARAATAQKNRALLAAADALDAARAELSHANEQDLAAGRANGLEPAMLDRLALTPARIDDMIEGLRQVATLPDPIGEIRDMRYVPSGIQIGKMRVPLGVVGIIYESRPNVTIDAASLCLKSGNATILRGGSEAIHSNQAIARCIQQGLAEAGLPAAAVQVVETTDRAAVGALISMPEYVDVIVPRGGKGLIERISREAKVPVIKHLDGICHVYIDVAADLDKAIRVADNAKTQRYAPCNTMETLLVHAGIAERVLPPLATIYREKGVELRGDAATRALLGADVLEATEEDWRTEYNAPILSIRIVDGLDAAIEHINTYGSQHTDAIITENFSDARRFLAEVDSASVMVNASTRFADGFEYGLGAEIGISTDKLHARGPVGLEGLTSEKYVVFGDGHVRT.

It belongs to the gamma-glutamyl phosphate reductase family.

It is found in the cytoplasm. The enzyme catalyses L-glutamate 5-semialdehyde + phosphate + NADP(+) = L-glutamyl 5-phosphate + NADPH + H(+). It functions in the pathway amino-acid biosynthesis; L-proline biosynthesis; L-glutamate 5-semialdehyde from L-glutamate: step 2/2. Catalyzes the NADPH-dependent reduction of L-glutamate 5-phosphate into L-glutamate 5-semialdehyde and phosphate. The product spontaneously undergoes cyclization to form 1-pyrroline-5-carboxylate. This chain is Gamma-glutamyl phosphate reductase, found in Pseudomonas aeruginosa (strain ATCC 15692 / DSM 22644 / CIP 104116 / JCM 14847 / LMG 12228 / 1C / PRS 101 / PAO1).